Reading from the N-terminus, the 529-residue chain is Peptide chain release factor 3 (529 aa).

Residues 11–280 (AKRRTFAIIS…GLVEWAPAPM (270 aa)) form the tr-type G domain. Residues 20 to 27 (SHPDAGKT), 88 to 92 (DTPGH), and 142 to 145 (NKLD) contribute to the GTP site.

The protein belongs to the TRAFAC class translation factor GTPase superfamily. Classic translation factor GTPase family. PrfC subfamily.

Its subcellular location is the cytoplasm. Functionally, increases the formation of ribosomal termination complexes and stimulates activities of RF-1 and RF-2. It binds guanine nucleotides and has strong preference for UGA stop codons. It may interact directly with the ribosome. The stimulation of RF-1 and RF-2 is significantly reduced by GTP and GDP, but not by GMP. In Shigella sonnei (strain Ss046), this protein is Peptide chain release factor 3.